Reading from the N-terminus, the 154-residue chain is Cathelicidin-2 (154 aa).

The N-terminal stretch at 1-17 (MLSCWVLLLALLGGVCA) is a signal peptide. Residues 18–122 (LPAPLSYPQA…RCRDASSDPV (105 aa)) constitute a propeptide that is removed on maturation. Cystine bridges form between C75/C86 and C97/C114.

Belongs to the cathelicidin family. In terms of tissue distribution, detected in trachea, lung, proventriculus, duodenum, jejunum, ileum, caeca, colon, caecal tonsil, bursa of Fabricius, kidney, ovary, testis, thymus, liver, spleen, bone marrow, skin, uropygial gland, muscle and brain.

Its subcellular location is the secreted. Its function is as follows. Binds bacterial lipopolysaccharide (LPS). Has potent antimicrobial activity against Gram-positive and Gram-negative bacteria (in vitro). Has hemolytic activity (in vitro). May play a role in the innate immune response. In Gallus gallus (Chicken), this protein is Cathelicidin-2 (CATHL2).